A 375-amino-acid polypeptide reads, in one-letter code: AA9 family lytic polysaccharide monooxygenase CEL1 (375 aa).

Residues 1 to 16 (MLFPALALLCPVLVAA) form the signal peptide. His119 contacts Cu(2+). A disulfide bond links Cys130 and Cys135. Asn132 carries N-linked (GlcNAc...) asparagine glycosylation. His196 lines the O2 pocket. An N-linked (GlcNAc...) asparagine glycan is attached at Asn197. Residue Tyr212 coordinates Cu(2+). Residues Cys232 and Cys237 are joined by a disulfide bond. The disordered stretch occupies residues 287-375 (NGMSSSPSSS…RSRVAHLDRH (89 aa)). The segment covering 290–341 (SSSPSSSSGVSSSSSSSVASSDTSDSTTSSGVVAVNVSAASSPSSSISANSA) has biased composition (low complexity). An N-linked (GlcNAc...) asparagine glycan is attached at Asn325. The segment covering 347-369 (KTCKRKKRSKIAGQKRHIHRSRV) has biased composition (basic residues).

The protein belongs to the polysaccharide monooxygenase AA9 family. Requires Cu(2+) as cofactor.

It localises to the secreted. It is found in the cell wall. The enzyme catalyses [(1-&gt;4)-beta-D-glucosyl]n+m + reduced acceptor + O2 = 4-dehydro-beta-D-glucosyl-[(1-&gt;4)-beta-D-glucosyl]n-1 + [(1-&gt;4)-beta-D-glucosyl]m + acceptor + H2O.. In terms of biological role, lytic polysaccharide monooxygenase (LPMO) that depolymerizes polysaccharides via the oxidation of scissile alpha- or beta-(1-4)-glycosidic bonds, yielding C4 oxidation products. Catalysis by LPMOs requires the reduction of the active-site copper from Cu(II) to Cu(I) by a reducing agent and H(2)O(2) or O(2) as a cosubstrate. Required for the expression of stress response phenotypes, including thermotolerance, cell wall integrity, and efficient cell cycle progression. Promotes intrinsic fungal cell wall remodeling events required for efficient adaptation to the host environment. Required for virulence in a murine inhalational model of cryptococcal infection as well as in Galleria mellonella larvae. This chain is AA9 family lytic polysaccharide monooxygenase CEL1, found in Cryptococcus neoformans var. grubii serotype A (strain H99 / ATCC 208821 / CBS 10515 / FGSC 9487) (Filobasidiella neoformans var. grubii).